The following is an 85-amino-acid chain: Toxin To9 (85 aa).

Residues 1 to 19 (MNYSTLIAVASLLTAGTES) form the signal peptide. An LCN-type CS-alpha/beta domain is found at 21–81 (KDGYPVKEGD…AAIKGYGRCR (61 aa)). 4 disulfide bridges follow: C31–C80, C35–C56, C42–C63, and C46–C65. Position 82 is a proline amide (P82).

Belongs to the long (4 C-C) scorpion toxin superfamily. Sodium channel inhibitor family. Alpha subfamily. In terms of tissue distribution, expressed by the venom gland.

It localises to the secreted. Its function is as follows. Alpha toxins bind voltage-independently at site-3 of sodium channels (Nav) and inhibit the inactivation of the activated channels, thereby blocking neuronal transmission. The polypeptide is Toxin To9 (Tityus obscurus (Amazonian scorpion)).